The chain runs to 472 residues: Nuclear receptor subfamily 0 group B member 1 (472 aa).

A run of 3 repeats spans residues 1 to 67 (MAGE…YRCC), 68 to 135 (FCGE…YRCC), and 136 to 202 (FCGE…YRSY). Positions 1–255 (MAGEDHPWQG…RLITLKDPQV (255 aa)) are 4 X 67 AA tandem repeats. 3 consecutive short sequence motifs (LXXLL motif) follow at residues 13–17 (LYNLL), 80–84 (LYSML), and 148–152 (LYSLL). One can recognise an NR LBD domain in the interval 190-471 (QSTQAMAFLY…DMMLEMLCAK (282 aa)). A 4; truncated repeat occupies 203-255 (VCGEEQPQQISVASGTPVSADQTPATPQEQPRAPWWDASPGVQRLITLKDPQV). Residues 214–231 (VASGTPVSADQTPATPQE) are compositionally biased toward polar residues. Disordered stretches follow at residues 214–238 (VASGTPVSADQTPATPQEQPRAPWW) and 324–343 (TTRRQETEGPEPAEPQATEQ). An AF-2 motif motif is present at residues 463 to 468 (MMLEML).

The protein belongs to the nuclear hormone receptor family. NR0 subfamily. As to quaternary structure, homodimer. Interacts with NR5A1, NR5A2, NR0B2 and with COPS2. Interacts with ESRRB; represses ESRRB activity at the GATA6 promoter. In terms of tissue distribution, expressed in adult cerebral cortex, spinal cord, thymus, heart, lung, ovary, testis, adrenal gland, hypothalamus, spleen and kidney.

It localises to the nucleus. The protein localises to the cytoplasm. Its function is as follows. Nuclear receptor that lacks a DNA-binding domain and acts as a corepressor that inhibits the transcriptional activity of other nuclear receptors through heterodimeric interactions. Component of a cascade required for the development of the hypothalamic-pituitary-adrenal-gonadal axis. May also have a role in the development of the embryo and in the maintenance of embryonic stem cell pluripotency. The sequence is that of Nuclear receptor subfamily 0 group B member 1 (Nr0b1) from Mus musculus (Mouse).